The sequence spans 340 residues: Phosphoribosylformylglycinamidine cyclo-ligase (340 aa).

It belongs to the AIR synthase family.

It is found in the cytoplasm. The enzyme catalyses 2-formamido-N(1)-(5-O-phospho-beta-D-ribosyl)acetamidine + ATP = 5-amino-1-(5-phospho-beta-D-ribosyl)imidazole + ADP + phosphate + H(+). Its pathway is purine metabolism; IMP biosynthesis via de novo pathway; 5-amino-1-(5-phospho-D-ribosyl)imidazole from N(2)-formyl-N(1)-(5-phospho-D-ribosyl)glycinamide: step 2/2. The polypeptide is Phosphoribosylformylglycinamidine cyclo-ligase (Acetivibrio thermocellus (strain ATCC 27405 / DSM 1237 / JCM 9322 / NBRC 103400 / NCIMB 10682 / NRRL B-4536 / VPI 7372) (Clostridium thermocellum)).